A 156-amino-acid polypeptide reads, in one-letter code: MGKNYEGHLVASGLKVGIVVGRFNEFITSKLLGGAQDGLIRHGADEGDIDVAWVPGAFEIPFAAKKMAESGRYDAVITLGTVIRGSTPHFDYVCNEVAKGVSSLALTTGIPVIFGVLTTDTIEQAVERAGTKAGNKGWEAASAAIEMANLAKQFEE.

5-amino-6-(D-ribitylamino)uracil is bound by residues Phe-23, 57–59 (AFE), and 81–83 (TVI). 86 to 87 (ST) lines the (2S)-2-hydroxy-3-oxobutyl phosphate pocket. Residue His-89 is the Proton donor of the active site. Residue Phe-114 participates in 5-amino-6-(D-ribitylamino)uracil binding. Arg-128 provides a ligand contact to (2S)-2-hydroxy-3-oxobutyl phosphate.

The protein belongs to the DMRL synthase family. Forms an icosahedral capsid composed of 60 subunits, arranged as a dodecamer of pentamers.

The enzyme catalyses (2S)-2-hydroxy-3-oxobutyl phosphate + 5-amino-6-(D-ribitylamino)uracil = 6,7-dimethyl-8-(1-D-ribityl)lumazine + phosphate + 2 H2O + H(+). It participates in cofactor biosynthesis; riboflavin biosynthesis; riboflavin from 2-hydroxy-3-oxobutyl phosphate and 5-amino-6-(D-ribitylamino)uracil: step 1/2. In terms of biological role, catalyzes the formation of 6,7-dimethyl-8-ribityllumazine by condensation of 5-amino-6-(D-ribitylamino)uracil with 3,4-dihydroxy-2-butanone 4-phosphate. This is the penultimate step in the biosynthesis of riboflavin. This chain is 6,7-dimethyl-8-ribityllumazine synthase, found in Shouchella clausii (strain KSM-K16) (Alkalihalobacillus clausii).